The sequence spans 345 residues: Chorismate synthase (345 aa).

This sequence belongs to the chorismate synthase family. As to quaternary structure, homotetramer. It depends on FMNH2 as a cofactor.

The enzyme catalyses 5-O-(1-carboxyvinyl)-3-phosphoshikimate = chorismate + phosphate. It participates in metabolic intermediate biosynthesis; chorismate biosynthesis; chorismate from D-erythrose 4-phosphate and phosphoenolpyruvate: step 7/7. The chain is Chorismate synthase (aroC) from Carsonella ruddii (strain PV).